The chain runs to 422 residues: 3-isopropylmalate dehydratase large subunit (422 aa).

C294, C354, and C357 together coordinate [4Fe-4S] cluster.

This sequence belongs to the aconitase/IPM isomerase family. LeuC type 2 subfamily. As to quaternary structure, heterodimer of LeuC and LeuD. [4Fe-4S] cluster serves as cofactor.

It carries out the reaction (2R,3S)-3-isopropylmalate = (2S)-2-isopropylmalate. Its pathway is amino-acid biosynthesis; L-leucine biosynthesis; L-leucine from 3-methyl-2-oxobutanoate: step 2/4. In terms of biological role, catalyzes the isomerization between 2-isopropylmalate and 3-isopropylmalate, via the formation of 2-isopropylmaleate. The sequence is that of 3-isopropylmalate dehydratase large subunit from Mycolicibacterium smegmatis (strain ATCC 700084 / mc(2)155) (Mycobacterium smegmatis).